Here is a 156-residue protein sequence, read N- to C-terminus: Ribonuclease H (156 aa).

The region spanning 1 to 142 is the RNase H type-1 domain; sequence MGKQVEIFTD…CDELARAAAN (142 aa). Residues Asp10, Glu48, Asp70, and Asp134 each coordinate Mg(2+).

This sequence belongs to the RNase H family. As to quaternary structure, monomer. Mg(2+) serves as cofactor.

It localises to the cytoplasm. It catalyses the reaction Endonucleolytic cleavage to 5'-phosphomonoester.. In terms of biological role, endonuclease that specifically degrades the RNA of RNA-DNA hybrids. In Photorhabdus luminescens (Xenorhabdus luminescens), this protein is Ribonuclease H.